Here is a 345-residue protein sequence, read N- to C-terminus: MQGLEPSRVGRVGEVCRSVHKNVLTVPEHTVGTEAAAPMGDQADWMSQLCPQLWDVPLHHLSIPGSHDTMTYCLNRKSRISRASSWLLHLLGRVVPFITGPVVMKWSVTQTLDVTQQLDAGVRYLDLRIAHAPEGSTRNLCFVHMMYTKALVEDTLTEIAEWLQSHPREVVILACRNFEGMTCELHDYLAGCIVNIFGDMLCPSGEVPTLRQLWAREQQVIVSYEDEATVSRYDQLWPAIPYWWGNAVKTDVLLRFLETMKGQGRPDGLFVAGINITENLCYILLHPVDSLEEMTRRSLPLMTEWVCAQQPGQSPQCTNIIAGDFVDADGFVSKVISLNCKLLSP.

The 177-residue stretch at 52–228 folds into the PI-PLC X-box domain; sequence QLWDVPLHHL…QVIVSYEDEA (177 aa).

In terms of tissue distribution, expressed at highest levels in brain and kidney. Also detected in stomach, thymus and skeletal muscle.

Its subcellular location is the cytoplasm. This Mus musculus (Mouse) protein is PI-PLC X domain-containing protein 1 (Plcxd1).